Consider the following 286-residue polypeptide: Phosphatidylserine decarboxylase proenzyme (286 aa).

Catalysis depends on charge relay system; for autoendoproteolytic cleavage activity residues D90, H147, and S253. S253 serves as the catalytic Schiff-base intermediate with substrate; via pyruvic acid; for decarboxylase activity. S253 carries the post-translational modification Pyruvic acid (Ser); by autocatalysis.

Belongs to the phosphatidylserine decarboxylase family. PSD-B subfamily. Prokaryotic type I sub-subfamily. In terms of assembly, heterodimer of a large membrane-associated beta subunit and a small pyruvoyl-containing alpha subunit. Pyruvate is required as a cofactor. Post-translationally, is synthesized initially as an inactive proenzyme. Formation of the active enzyme involves a self-maturation process in which the active site pyruvoyl group is generated from an internal serine residue via an autocatalytic post-translational modification. Two non-identical subunits are generated from the proenzyme in this reaction, and the pyruvate is formed at the N-terminus of the alpha chain, which is derived from the carboxyl end of the proenzyme. The autoendoproteolytic cleavage occurs by a canonical serine protease mechanism, in which the side chain hydroxyl group of the serine supplies its oxygen atom to form the C-terminus of the beta chain, while the remainder of the serine residue undergoes an oxidative deamination to produce ammonia and the pyruvoyl prosthetic group on the alpha chain. During this reaction, the Ser that is part of the protease active site of the proenzyme becomes the pyruvoyl prosthetic group, which constitutes an essential element of the active site of the mature decarboxylase.

It is found in the cell membrane. It carries out the reaction a 1,2-diacyl-sn-glycero-3-phospho-L-serine + H(+) = a 1,2-diacyl-sn-glycero-3-phosphoethanolamine + CO2. It participates in phospholipid metabolism; phosphatidylethanolamine biosynthesis; phosphatidylethanolamine from CDP-diacylglycerol: step 2/2. Functionally, catalyzes the formation of phosphatidylethanolamine (PtdEtn) from phosphatidylserine (PtdSer). This Pseudoalteromonas atlantica (strain T6c / ATCC BAA-1087) protein is Phosphatidylserine decarboxylase proenzyme.